The primary structure comprises 356 residues: S-adenosylmethionine:tRNA ribosyltransferase-isomerase (356 aa).

The protein belongs to the QueA family. As to quaternary structure, monomer.

The protein resides in the cytoplasm. It carries out the reaction 7-aminomethyl-7-carbaguanosine(34) in tRNA + S-adenosyl-L-methionine = epoxyqueuosine(34) in tRNA + adenine + L-methionine + 2 H(+). Its pathway is tRNA modification; tRNA-queuosine biosynthesis. In terms of biological role, transfers and isomerizes the ribose moiety from AdoMet to the 7-aminomethyl group of 7-deazaguanine (preQ1-tRNA) to give epoxyqueuosine (oQ-tRNA). The chain is S-adenosylmethionine:tRNA ribosyltransferase-isomerase from Escherichia coli (strain 55989 / EAEC).